The following is a 188-amino-acid chain: Threonylcarbamoyl-AMP synthase (188 aa).

A YrdC-like domain is found at 3-188; the sequence is QLHPSDIKDV…RSGKILRNGQ (186 aa).

This sequence belongs to the SUA5 family. TsaC subfamily.

The protein resides in the cytoplasm. It catalyses the reaction L-threonine + hydrogencarbonate + ATP = L-threonylcarbamoyladenylate + diphosphate + H2O. In terms of biological role, required for the formation of a threonylcarbamoyl group on adenosine at position 37 (t(6)A37) in tRNAs that read codons beginning with adenine. Catalyzes the conversion of L-threonine, HCO(3)(-)/CO(2) and ATP to give threonylcarbamoyl-AMP (TC-AMP) as the acyladenylate intermediate, with the release of diphosphate. In Shewanella oneidensis (strain ATCC 700550 / JCM 31522 / CIP 106686 / LMG 19005 / NCIMB 14063 / MR-1), this protein is Threonylcarbamoyl-AMP synthase.